The following is a 129-amino-acid chain: Glycine cleavage system H protein (129 aa).

The 83-residue stretch at 24–106 (EAVVGITEHA…YGAGWLFRIK (83 aa)) folds into the Lipoyl-binding domain. Lys-65 is subject to N6-lipoyllysine.

Belongs to the GcvH family. In terms of assembly, the glycine cleavage system is composed of four proteins: P, T, L and H. The cofactor is (R)-lipoate.

In terms of biological role, the glycine cleavage system catalyzes the degradation of glycine. The H protein shuttles the methylamine group of glycine from the P protein to the T protein. The sequence is that of Glycine cleavage system H protein from Aeromonas salmonicida (strain A449).